A 131-amino-acid chain; its full sequence is Large ribosomal subunit protein bL17 (131 aa).

It belongs to the bacterial ribosomal protein bL17 family. Part of the 50S ribosomal subunit. Contacts protein L32.

This chain is Large ribosomal subunit protein bL17, found in Shewanella baltica (strain OS223).